The sequence spans 444 residues: Trigger factor (444 aa).

Residues 165–250 enclose the PPIase FKBP-type domain; it reads GDFAKFDFEG…LHEIQELKIP (86 aa).

It belongs to the FKBP-type PPIase family. Tig subfamily.

The protein resides in the cytoplasm. The catalysed reaction is [protein]-peptidylproline (omega=180) = [protein]-peptidylproline (omega=0). Its function is as follows. Involved in protein export. Acts as a chaperone by maintaining the newly synthesized protein in an open conformation. Functions as a peptidyl-prolyl cis-trans isomerase. This Campylobacter jejuni subsp. jejuni serotype O:23/36 (strain 81-176) protein is Trigger factor.